Here is a 309-residue protein sequence, read N- to C-terminus: NAD-dependent protein deacylase sirtuin-5B, mitochondrial (309 aa).

The N-terminal 35 residues, 1–35, are a transit peptide targeting the mitochondrion; that stretch reads MILLPFHTRRLVSHVYCGLKPASQNKGIALEMTRP. In terms of domain architecture, Deacetylase sirtuin-type spans 36-306; that stretch reads SSNLANFREA…PPALARHETE (271 aa). 57–76 serves as a coordination point for NAD(+); it reads GAGVSAESGVPTIIGAGGYW. Residues Y101 and R104 each coordinate substrate. 139–142 contributes to the NAD(+) binding site; it reads QNID. The Proton acceptor role is filled by H157. Residues C165, C168, C206, and C211 each coordinate Zn(2+). Residues 248 to 250, 274 to 276, and C292 each bind NAD(+); these read GTS and NME.

It belongs to the sirtuin family. Class III subfamily. Zn(2+) serves as cofactor.

The protein localises to the mitochondrion. It is found in the cytoplasm. Its subcellular location is the cytosol. The protein resides in the nucleus. The catalysed reaction is N(6)-malonyl-L-lysyl-[protein] + NAD(+) + H2O = 2''-O-malonyl-ADP-D-ribose + nicotinamide + L-lysyl-[protein]. The enzyme catalyses N(6)-succinyl-L-lysyl-[protein] + NAD(+) + H2O = 2''-O-succinyl-ADP-D-ribose + nicotinamide + L-lysyl-[protein]. It carries out the reaction N(6)-glutaryl-L-lysyl-[protein] + NAD(+) + H2O = 2''-O-glutaryl-ADP-D-ribose + nicotinamide + L-lysyl-[protein]. Functionally, NAD-dependent lysine demalonylase, desuccinylase and deglutarylase that specifically removes malonyl, succinyl and glutaryl groups on target proteins. Has weak NAD-dependent protein deacetylase activity; however this activity may not be physiologically relevant in vivo. The polypeptide is NAD-dependent protein deacylase sirtuin-5B, mitochondrial (sirt5-b) (Xenopus laevis (African clawed frog)).